We begin with the raw amino-acid sequence, 155 residues long: Small ribosomal subunit protein eS19 (155 aa).

The protein belongs to the eukaryotic ribosomal protein eS19 family. Component of the small ribosomal subunit.

It localises to the cytoplasm. Functionally, component of the small ribosomal subunit. The ribosome is a large ribonucleoprotein complex responsible for the synthesis of proteins in the cell. Required for proper maturation of the small (40S) ribosomal subunit. This Entamoeba histolytica (strain ATCC 30459 / HM-1:IMSS / ABRM) protein is Small ribosomal subunit protein eS19 (RPS19).